Consider the following 144-residue polypeptide: Mediator of RNA polymerase II transcription subunit 10 (144 aa).

It belongs to the Mediator complex subunit 10 family. Component of the Mediator complex.

The protein localises to the cytoplasm. It is found in the nucleus. It localises to the nucleus envelope. In terms of biological role, component of the Mediator complex, a coactivator involved in the regulated transcription of nearly all RNA polymerase II-dependent genes. Mediator functions as a bridge to convey information from gene-specific regulatory proteins to the basal RNA polymerase II transcription machinery. Mediator is recruited to promoters by direct interactions with regulatory proteins and serves as a scaffold for the assembly of a functional preinitiation complex with RNA polymerase II and the general transcription factors. The chain is Mediator of RNA polymerase II transcription subunit 10 (med10) from Schizosaccharomyces pombe (strain 972 / ATCC 24843) (Fission yeast).